Here is a 937-residue protein sequence, read N- to C-terminus: Calsyntenin-2 (937 aa).

The N-terminal stretch at 1–22 (MKMRAITAMLLLVLSGQCGILA) is a signal peptide. Over 23 to 818 (GKVNKHKPWI…NSDHISGTPP (796 aa)) the chain is Extracellular. Cadherin domains lie at 32 to 148 (IETS…SPVF) and 149 to 249 (REPL…KPGW). Asn86 is a glycosylation site (N-linked (GlcNAc...) asparagine). N-linked (GlcNAc...) asparagine glycans are attached at residues Asn330, Asn365, and Asn716. The helical transmembrane segment at 819–839 (AATVVIVMCIAALVVIVVLGI) threads the bilayer. Topologically, residues 840–937 (YRIHTTHQDS…LEWDPSTLPY (98 aa)) are cytoplasmic. Residues 846–937 (HQDSSKEDEE…LEWDPSTLPY (92 aa)) form a disordered region. Residues 865–874 (DNSNLNSIEG) show a composition bias toward polar residues. Acidic residues-rich tracts occupy residues 881-900 (VREE…DDLA) and 907-917 (ESEDSDEDEET).

This sequence belongs to the calsyntenin family. As to quaternary structure, homooligomer and heterooligomer; mediates both homophilic and heterophilc interactions with clstn1 and clstn3 paralogs via cadherin domains. In terms of tissue distribution, by 48 hours post-fertilization (hpf), widely expressed in the brain, with strong expression in the telencephalon and the midbrain.

It is found in the postsynaptic cell membrane. Its subcellular location is the endoplasmic reticulum membrane. It localises to the golgi apparatus membrane. The protein resides in the cell projection. The protein localises to the dendrite. Its function is as follows. Postsynaptic adhesion molecule. Promotes synapse development by acting as a cell adhesion molecule at the postsynaptic membrane, which associates with presynaptic neurexins. The polypeptide is Calsyntenin-2 (clstn2a) (Danio rerio (Zebrafish)).